A 508-amino-acid chain; its full sequence is MTEPTQTQPAVAADENQIIAERREKLRALREQGVAYPNDFRPTHHAADLQATFADSDKAALEANPVEVSVAGRMMLKRVMGKASFATVQDGSGQIQFFVTPNDVGAETYDAFKKWDLGDIVAARGVLFRTNKGELSVQCKELRLLSKALRPLPDKFHGLADQEMRYRQRYVDLIVTPETRDTFRARTRTIASIRKFMDNADFMEVETPMLHPIPGGAAAKPFVTHHNALDMQMFLRIAPELYLKRLIVGGFERVFEINRNFRNEGVSPRHNPEFTMMEFYAAYTDYRWLMDFTEQLIRQAAIDALGTATIQYQGRELDLAKPFHRLTITQAIQKYAPQYTDGQLSDDAFLRTELKRFGVDVSQPAFLNAGIGALQLALFEETAESQLWEPTYIIDYPVEVSPLARASDTTPGITERFELFMTGREIANGFSELNDPEDQAARFKKQVEQKDAGDEEAMFFDADYIRALEHGMPPTGGCGIGIDRLVMLLTDSPTIRDVLLFPHLRRED.

Residues E418 and E425 each contribute to the Mg(2+) site.

The protein belongs to the class-II aminoacyl-tRNA synthetase family. Homodimer. Mg(2+) is required as a cofactor.

It localises to the cytoplasm. It carries out the reaction tRNA(Lys) + L-lysine + ATP = L-lysyl-tRNA(Lys) + AMP + diphosphate. The chain is Lysine--tRNA ligase from Burkholderia ambifaria (strain MC40-6).